Consider the following 389-residue polypeptide: Dihydroorotase (389 aa).

The Zn(2+) site is built by histidine 51 and histidine 53. Substrate-binding positions include histidine 53–arginine 55 and asparagine 85. The Zn(2+) site is built by lysine 133, histidine 158, histidine 193, and aspartate 256. At lysine 133 the chain carries N6-carboxylysine. The active site involves aspartate 256. Substrate contacts are provided by residues histidine 260 and proline 274–glycine 275.

Belongs to the metallo-dependent hydrolases superfamily. DHOase family. Class I DHOase subfamily. It depends on Zn(2+) as a cofactor.

It carries out the reaction (S)-dihydroorotate + H2O = N-carbamoyl-L-aspartate + H(+). Its pathway is pyrimidine metabolism; UMP biosynthesis via de novo pathway; (S)-dihydroorotate from bicarbonate: step 3/3. Catalyzes the reversible cyclization of carbamoyl aspartate to dihydroorotate. This chain is Dihydroorotase, found in Sulfolobus acidocaldarius (strain ATCC 33909 / DSM 639 / JCM 8929 / NBRC 15157 / NCIMB 11770).